A 151-amino-acid chain; its full sequence is Macrodomain Ter protein (151 aa).

This sequence belongs to the MatP family. Homodimer.

The protein resides in the cytoplasm. Required for spatial organization of the terminus region of the chromosome (Ter macrodomain) during the cell cycle. Prevents early segregation of duplicated Ter macrodomains during cell division. Binds specifically to matS, which is a 13 bp signature motif repeated within the Ter macrodomain. The polypeptide is Macrodomain Ter protein (Enterobacter sp. (strain 638)).